Here is a 911-residue protein sequence, read N- to C-terminus: MQEKYNHIDVERAAQDHWSARDAYRVTEDQAKPKFYACSMLPYPSGKLHMGHVRNYTINDMLTRQLRMKGYNVLMPMGWDAFGLPAENAALKNKVPPAQWTYDNIAYMKKQMQAMGLAIDWSREIATCDPDYYKWNQWLFLKMLEKGIAYRKTQVVNWDPVDQTVLANEQVIDGRGWRTGAPVEKREIPGYYLKITDYAQELLDHVQVGGDKATLTGWPEKVRLMQENWIGKSSGVRFAFTHDIRGADGQPIQDGRLYVFTTRADTIMGVTFCAVAPEHPLALHAAATSPKLAAFIEECKKGGTTEAELAVKEKEGLPTGLFVTHPLTGAQVEVWVGNYVLMSYGDGAVMGVPAHDERDFAFAKKYGIAIRQVIAVEGETFSTEAWADWYGDKQRAVCIESGELDGLPHAAAVDKVAELLAAKGLGEKKTTWRLRDWGVSRQRYWGTPIPIIHCEDCGAQPVPAKDLPVVLPQDLVPDGSGNPLIKSEAFHAGVVCPCCGKSARRETDTMDTFVDSSWYFMRYCDARNSEQMVAEGAEYWMRDQNAATGGSGMDQYIGGIEHAILHLLYARFWTKVMRDLGLVKVDEPFTKLLTQGMVLNHIYSRRTAKGAKEYFWPKDVEHVFDETGKIVGAKLKAEVDSADGLLPVGTDIDYEGVGTMSKSKNNGIDPQELIEKYGADTARLYTMFTAPPELTLEWNDAAVEGSYRFLRRVYNFGAKLSQMDMAGAVQSVAGAKSLDDVEFGKAAKSLRLEIHTVLKQVEYDYQRMQYNTVVSGAMKMINALEDFKSFDDAGAQVALIEGFGILLRVLYPATPHLAHALWSELGYAAHLGDVLDAPWPQVDPQALVQDEISLVLQVNGKLRGAILVSSTADKAEIERIALANEECQKFTNGAVPKKVIVVPGRLVNVVV.

The 'HIGH' region motif lies at 42–52 (PYPSGKLHMGH). A 'KMSKS' region motif is present at residues 659 to 663 (TMSKS). Lys-662 is an ATP binding site.

It belongs to the class-I aminoacyl-tRNA synthetase family.

The protein localises to the cytoplasm. The enzyme catalyses tRNA(Leu) + L-leucine + ATP = L-leucyl-tRNA(Leu) + AMP + diphosphate. This Delftia acidovorans (strain DSM 14801 / SPH-1) protein is Leucine--tRNA ligase.